A 224-amino-acid polypeptide reads, in one-letter code: Synaptogyrin-2 (224 aa).

Position 1 is an N-acetylmethionine (Met1). Ser3 carries the post-translational modification Phosphoserine. In terms of domain architecture, MARVEL spans 20 to 171; the sequence is YVSQPQVVTR…LASLAYQRYK (152 aa). Helical transmembrane passes span 30-50, 73-93, 105-125, and 147-167; these read LVSMVLALIVFSCIFGEGYIN, AIGVLAFLASAFFLVVDAFFS, VIGDLLFSALWTFLWFVGFCF, and AAITFSFFSIFSWGVLASLAY.

It belongs to the synaptogyrin family. In terms of processing, may be tyrosine phosphorylated by Src. In terms of tissue distribution, ubiquitously expressed with lower expression in brain (at protein level).

It localises to the cytoplasmic vesicle membrane. The protein resides in the cytoplasmic vesicle. The protein localises to the secretory vesicle. It is found in the synaptic vesicle membrane. Functionally, may play a role in regulated exocytosis. In neuronal cells, modulates the localization of synaptophysin/SYP into synaptic-like microvesicles and may therefore play a role in the formation and/or the maturation of this vesicles. May also play a role in GLUT4 storage and transport to the plasma membrane. The chain is Synaptogyrin-2 from Rattus norvegicus (Rat).